The chain runs to 484 residues: Serine/arginine-rich splicing factor 11 (484 aa).

The tract at residues methionine 1 to glutamate 33 is disordered. The residue at position 2 (serine 2) is an N-acetylserine. Residues glycine 14 to threonine 32 show a composition bias toward gly residues. In terms of domain architecture, RRM spans glutamate 33–glycine 113. Lysine 197 is covalently cross-linked (Glycyl lysine isopeptide (Lys-Gly) (interchain with G-Cter in SUMO2)). Residue serine 207 is modified to Phosphoserine. Lysine 211 participates in a covalent cross-link: Glycyl lysine isopeptide (Lys-Gly) (interchain with G-Cter in SUMO2). A Phosphoserine modification is found at serine 212. The interval isoleucine 233–aspartate 484 is disordered. Basic residues predominate over residues glutamate 244–serine 308. 10 consecutive repeat copies span residues arginine 247–serine 255, arginine 258–arginine 265, arginine 267–arginine 274, arginine 275–arginine 282, arginine 285–arginine 292, arginine 293–arginine 300, arginine 302–lysine 309, lysine 321–lysine 328, arginine 334–arginine 341, and arginine 346–arginine 353. A 10 X 8 AA approximate repeats of R-R-S-R-S-R-S-R region spans residues arginine 247–arginine 353. Basic and acidic residues predominate over residues lysine 309–lysine 320. Serine 323 carries the phosphoserine modification. Threonine 325 carries the phosphothreonine modification. Over residues arginine 334–lysine 379 the composition is skewed to basic residues. 3 stretches are compositionally biased toward basic and acidic residues: residues lysine 380–threonine 395, lysine 402–aspartate 424, and aspartate 433–glutamate 478. Serine 414 and serine 434 each carry phosphoserine. Residue threonine 447 is modified to Phosphothreonine. 4 positions are modified to phosphoserine: serine 449, serine 456, serine 464, and serine 483.

This sequence belongs to the splicing factor SR family. As to quaternary structure, interacts with PUF60.

The protein resides in the nucleus. In terms of biological role, may function in pre-mRNA splicing. This Homo sapiens (Human) protein is Serine/arginine-rich splicing factor 11 (SRSF11).